The chain runs to 392 residues: Succinate--CoA ligase [ADP-forming] subunit beta (392 aa).

Positions 9–236 constitute an ATP-grasp domain; the sequence is RDLFERHGLP…QAAVDPLEQA (228 aa). ATP-binding positions include Lys-45, 52 to 54, Ala-94, and Glu-99; that span reads GRG. Mg(2+) is bound by residues Asn-191 and Asp-205. Substrate is bound by residues Asn-256 and 318 to 320; that span reads GIT.

The protein belongs to the succinate/malate CoA ligase beta subunit family. As to quaternary structure, heterotetramer of two alpha and two beta subunits. Mg(2+) is required as a cofactor.

The catalysed reaction is succinate + ATP + CoA = succinyl-CoA + ADP + phosphate. It catalyses the reaction GTP + succinate + CoA = succinyl-CoA + GDP + phosphate. The protein operates within carbohydrate metabolism; tricarboxylic acid cycle; succinate from succinyl-CoA (ligase route): step 1/1. Its function is as follows. Succinyl-CoA synthetase functions in the citric acid cycle (TCA), coupling the hydrolysis of succinyl-CoA to the synthesis of either ATP or GTP and thus represents the only step of substrate-level phosphorylation in the TCA. The beta subunit provides nucleotide specificity of the enzyme and binds the substrate succinate, while the binding sites for coenzyme A and phosphate are found in the alpha subunit. This chain is Succinate--CoA ligase [ADP-forming] subunit beta, found in Salinispora tropica (strain ATCC BAA-916 / DSM 44818 / JCM 13857 / NBRC 105044 / CNB-440).